A 543-amino-acid chain; its full sequence is 2,3-bisphosphoglycerate-independent phosphoglycerate mutase (543 aa).

Positions 24 and 74 each coordinate Mn(2+). Ser-74 serves as the catalytic Phosphoserine intermediate. Substrate is bound by residues His-135, 165–166, Arg-197, Arg-203, 268–271, and Lys-341; these read RD and RPDR. Mn(2+)-binding residues include Asp-408, His-412, Asp-449, His-450, and His-467.

The protein belongs to the BPG-independent phosphoglycerate mutase family. Monomer. Requires Mn(2+) as cofactor.

The enzyme catalyses (2R)-2-phosphoglycerate = (2R)-3-phosphoglycerate. It functions in the pathway carbohydrate degradation; glycolysis; pyruvate from D-glyceraldehyde 3-phosphate: step 3/5. Catalyzes the interconversion of 2-phosphoglycerate and 3-phosphoglycerate. The polypeptide is 2,3-bisphosphoglycerate-independent phosphoglycerate mutase (Parasynechococcus marenigrum (strain WH8102)).